Consider the following 117-residue polypeptide: Iron-sulfur cluster insertion protein ErpA (117 aa).

3 residues coordinate iron-sulfur cluster: cysteine 45, cysteine 109, and cysteine 111.

It belongs to the HesB/IscA family. Homodimer. Iron-sulfur cluster is required as a cofactor.

Its function is as follows. Required for insertion of 4Fe-4S clusters for at least IspG. The protein is Iron-sulfur cluster insertion protein ErpA of Ruthia magnifica subsp. Calyptogena magnifica.